A 183-amino-acid polypeptide reads, in one-letter code: 3-hydroxydecanoyl-[acyl-carrier-protein] dehydratase (183 aa).

His-77 is a catalytic residue.

It belongs to the thioester dehydratase family. FabA subfamily. As to quaternary structure, homodimer.

Its subcellular location is the cytoplasm. It carries out the reaction a (3R)-hydroxyacyl-[ACP] = a (2E)-enoyl-[ACP] + H2O. The catalysed reaction is (3R)-hydroxydecanoyl-[ACP] = (2E)-decenoyl-[ACP] + H2O. The enzyme catalyses (2E)-decenoyl-[ACP] = (3Z)-decenoyl-[ACP]. It functions in the pathway lipid metabolism; fatty acid biosynthesis. Functionally, necessary for the introduction of cis unsaturation into fatty acids. Catalyzes the dehydration of (3R)-3-hydroxydecanoyl-ACP to E-(2)-decenoyl-ACP and then its isomerization to Z-(3)-decenoyl-ACP. Can catalyze the dehydratase reaction for beta-hydroxyacyl-ACPs with saturated chain lengths up to 16:0, being most active on intermediate chain length. This chain is 3-hydroxydecanoyl-[acyl-carrier-protein] dehydratase, found in Hahella chejuensis (strain KCTC 2396).